The primary structure comprises 219 residues: Protoglabretal synthase ISM2 (219 aa).

Helical transmembrane passes span 26–46, 59–79, 112–132, 144–164, and 178–198; these read VHAWNGAATFLVMYGIWVLAG, LMIWWAVSGLIHIIHEGYWLF, AVVGIEGIAVIIVGPASLFAV, ILQLALALVQFYGSTLYFITA, and YYKYFIAQGGTWLLFPALIII. Residues 55–197 form the EXPERA domain; sequence TDKWLMIWWA…TWLLFPALII (143 aa).

Belongs to the EBP family.

Its subcellular location is the membrane. It catalyses the reaction 7,8-epoxymelianol = protoglabretal. The protein operates within secondary metabolite biosynthesis; terpenoid biosynthesis. Its function is as follows. Isomerase involved in the biosynthesis of glabretanes triterpene natural products such as glabretal, a component with in vitro antiproliferative properties on lymphocytes. Catalyzes the conversion of 7,8-epoxymelianol to protoglabretal via skeletal rearrangements. The polypeptide is Protoglabretal synthase ISM2 (Ailanthus altissima (Tree-of-heaven)).